A 93-amino-acid chain; its full sequence is UPF0223 protein LACR_0546 (93 aa).

This sequence belongs to the UPF0223 family.

This is UPF0223 protein LACR_0546 from Lactococcus lactis subsp. cremoris (strain SK11).